The primary structure comprises 236 residues: Small ribosomal subunit protein uS2c (236 aa).

It belongs to the universal ribosomal protein uS2 family.

It is found in the plastid. This is Small ribosomal subunit protein uS2c (rps2) from Cuscuta exaltata (Tall dodder).